Reading from the N-terminus, the 380-residue chain is Cytochrome b (380 aa).

A run of 4 helical transmembrane segments spans residues 34–54, 78–99, 114–134, and 179–199; these read FGSLLALCLMTQILTGLLLAM, WLIRNMHANGASFFFICIYMHI, WNTGVLLLLTLMATAFVGYVL, and FFALHFLLPFMIAGLTLIHLT. Heme b is bound by residues H84 and H98. Heme b is bound by residues H183 and H197. H202 is a binding site for a ubiquinone. Transmembrane regions (helical) follow at residues 227-247, 289-309, 321-341, and 348-368; these read LKDILGLALLLLPLTTMALFS, LGGVLALAASVLVLFLSPLLH, LSQLLFWTLVANLFILTWIGS, and FIIIGQLASTTYFTILLILFP.

The protein belongs to the cytochrome b family. In terms of assembly, the cytochrome bc1 complex contains 11 subunits: 3 respiratory subunits (MT-CYB, CYC1 and UQCRFS1), 2 core proteins (UQCRC1 and UQCRC2) and 6 low-molecular weight proteins (UQCRH/QCR6, UQCRB/QCR7, UQCRQ/QCR8, UQCR10/QCR9, UQCR11/QCR10 and a cleavage product of UQCRFS1). This cytochrome bc1 complex then forms a dimer. Heme b is required as a cofactor.

It localises to the mitochondrion inner membrane. Functionally, component of the ubiquinol-cytochrome c reductase complex (complex III or cytochrome b-c1 complex) that is part of the mitochondrial respiratory chain. The b-c1 complex mediates electron transfer from ubiquinol to cytochrome c. Contributes to the generation of a proton gradient across the mitochondrial membrane that is then used for ATP synthesis. The chain is Cytochrome b (MT-CYB) from Oceanodroma furcata (Fork-tailed storm-petrel).